The chain runs to 199 residues: FMN-dependent NADH:quinone oxidoreductase 2 (199 aa).

Residues S10, 17–19 (SDS), and 135–138 (TKGG) contribute to the FMN site.

Belongs to the azoreductase type 1 family. Homodimer. FMN is required as a cofactor.

It carries out the reaction 2 a quinone + NADH + H(+) = 2 a 1,4-benzosemiquinone + NAD(+). It catalyses the reaction N,N-dimethyl-1,4-phenylenediamine + anthranilate + 2 NAD(+) = 2-(4-dimethylaminophenyl)diazenylbenzoate + 2 NADH + 2 H(+). Its function is as follows. Quinone reductase that provides resistance to thiol-specific stress caused by electrophilic quinones. Functionally, also exhibits azoreductase activity. Catalyzes the reductive cleavage of the azo bond in aromatic azo compounds to the corresponding amines. The sequence is that of FMN-dependent NADH:quinone oxidoreductase 2 from Mesoplasma florum (strain ATCC 33453 / NBRC 100688 / NCTC 11704 / L1) (Acholeplasma florum).